Here is a 96-residue protein sequence, read N- to C-terminus: Prokineticin Bm8-a (96 aa).

The N-terminal stretch at 1 to 19 (MKCFAQIVVLLLVIAFSHG) is a signal peptide. Disulfide bonds link C26–C38, C32–C50, C37–C78, C60–C86, and C80–C95.

It belongs to the AVIT (prokineticin) family. As to expression, expressed by the skin glands.

Its subcellular location is the secreted. Potent agonist for both PKR1/PROKR1 and PKR2/PROKR2, and inducer of a potent and long-lasting hyperalgesia. Also potentiates capsaicin-induced TRPV1 current, when tested on DRG neurons. At subnanomolar concentrations, this protein both induces potent chemotaxis of macrophages and stimulates LPS-induced production of the pro-inflammatory cytokines IL-1 and IL-12. In vivo, potently stimulates the contraction of the guinea-pig gastrointestinal (GI) smooth muscle (nanomolar concentration). The sequence is that of Prokineticin Bm8-a from Bombina maxima (Giant fire-bellied toad).